A 193-amino-acid polypeptide reads, in one-letter code: p53 apoptosis effector related to PMP-22 (193 aa).

The next 4 membrane-spanning stretches (helical) occupy residues 12–32 (RWILPLLLLSAIAFDIIALAG), 79–99 (AMLFCGFIILVICFILSFFAL), 110–130 (VIGGLLALAAVFQIISLVIYP), and 151–171 (WAYGFGWAATIILIGCAFFFC).

Belongs to the TMEM47 family. As to quaternary structure, (Microbial infection) Interacts with S.typhimurium sipA and sctB1/sipC. In terms of tissue distribution, expressed in skin, heart, placental, liver, pancreas, keratinocytes and dermal fibroblasts. May translocate to the intestinal apical epithelial cell surface via sipA and sctB1/sipC-promoted exocytic translocation following infection by S. Typhimurium.

It localises to the cell junction. The protein localises to the desmosome. Its subcellular location is the cell membrane. The protein resides in the cytoplasm. In terms of biological role, component of intercellular desmosome junctions. Plays a role in stratified epithelial integrity and cell-cell adhesion by promoting desmosome assembly. Thereby plays a role in barrier function of the skin against infection. Plays a role in mammary epithelial tissue homeostasis and remodeling during and after pregnancy, potentially via its involvement in desmosome cell-cell junctions. Required for tooth enamel development via facilitating desmosome-mediated ameloblast adhesion to the stratum intermedium during the transitional stage of amelogenesis. May also play a role in downstream transcriptional regulation of other genes involved in amelogenesis such as AMBN, ENAM, MMP20 and KLK4. Plays a role as an effector in the TP53-dependent apoptotic pathway. Positively regulates apoptosis in T-helper 17 (Th17) cell populations via caspase-dependent signaling. Promotes neutrophil transepithelial migration in response to chemoattractants such as hepoxilin A3 (HXA3), N-Formylmethionyl-leucyl-phenylalanine (fMLP) and CXCL8/IL-8. Required for neutrophil transepithelial migration in response to S.typhimurium infection. May act as a positive regulator of endothelial cell apoptosis in response to blood flow-derived shear stress. In Homo sapiens (Human), this protein is p53 apoptosis effector related to PMP-22.